Here is a 307-residue protein sequence, read N- to C-terminus: MTQKKIKCALIGPGNIGTDLLMKLQRSPILEPVWMVGIDPESDGLKRAREMGIKTTADGVDGLLPFVKEDGIQIAFDATSAYVHAENSRKLNELGVLMIDLTPAAIGPYCVPSVNLAEKVAEKAMNVNMVTCGGQATIPMVAAVSRVQAVSYGEIVATVSSRSVGPGTRKNIDEFTRTTSGAVEKIGGAQKGKAIIVINPAEPPLIMRDTIHCLTVDTPKPAEIEASVHAMIKEVQKYVPGYKLVNGPVIDGNRVSIYMEVEGLGDYLPKYAGNLDIMTAAAARTAEMFAEEILAGRFELAEAAVAV.

Cys132 (acyl-thioester intermediate) is an active-site residue. NAD(+) is bound by residues 163–171 (SVGPGTRKN) and Asn274.

The protein belongs to the acetaldehyde dehydrogenase family.

The catalysed reaction is acetaldehyde + NAD(+) + CoA = acetyl-CoA + NADH + H(+). The chain is Acetaldehyde dehydrogenase 1 (tesF) from Comamonas testosteroni (Pseudomonas testosteroni).